The chain runs to 525 residues: D-aminopeptidase (525 aa).

Residue Ser-62 is the Nucleophile of the active site. Lys-65 acts as the Proton donor/acceptor in catalysis. Positions 485-495 are important for specificity; that stretch reads PRALDHTAPGD. Asp-489 serves as a coordination point for substrate.

Belongs to the peptidase S12 family. In terms of assembly, homodimer.

The enzyme catalyses Release of an N-terminal D-amino acid from a peptide, Xaa-|-Yaa-, in which Xaa is preferably D-Ala, D-Ser or D-Thr. D-amino acid amides and methyl esters also are hydrolyzed, as is glycine amide.. Its activity is regulated as follows. Inhibited by beta-lactam compounds such as 6-aminopenicillic acid, 7-aminocephalosporanic acid, benzylpenicillin and ampicillin. Inhibited by p-chloromercuribenzoate. In terms of biological role, hydrolyzes N-terminal residues in D-amino acid-containing peptides. The protein is D-aminopeptidase of Gluconobacter oxydans (strain 621H) (Gluconobacter suboxydans).